The chain runs to 884 residues: Alanine--tRNA ligase (884 aa).

Positions 572, 576, 673, and 677 each coordinate Zn(2+).

It belongs to the class-II aminoacyl-tRNA synthetase family. Zn(2+) serves as cofactor.

The protein localises to the cytoplasm. It carries out the reaction tRNA(Ala) + L-alanine + ATP = L-alanyl-tRNA(Ala) + AMP + diphosphate. In terms of biological role, catalyzes the attachment of alanine to tRNA(Ala) in a two-step reaction: alanine is first activated by ATP to form Ala-AMP and then transferred to the acceptor end of tRNA(Ala). Also edits incorrectly charged Ser-tRNA(Ala) and Gly-tRNA(Ala) via its editing domain. The chain is Alanine--tRNA ligase from Xylella fastidiosa (strain 9a5c).